We begin with the raw amino-acid sequence, 153 residues long: Transcriptional repressor NrdR (153 aa).

Residues 3–34 (CPFCGYEDTRVLDSRELSEGRAIRRRRECPQC) fold into a zinc finger. The ATP-cone domain maps to 49 to 139 (ITVIKKDGRR…VYKDFREIDQ (91 aa)).

Belongs to the NrdR family. Zn(2+) is required as a cofactor.

Its function is as follows. Negatively regulates transcription of bacterial ribonucleotide reductase nrd genes and operons by binding to NrdR-boxes. The sequence is that of Transcriptional repressor NrdR from Fervidobacterium nodosum (strain ATCC 35602 / DSM 5306 / Rt17-B1).